Reading from the N-terminus, the 385-residue chain is Centrosomal protein of 44 kDa (385 aa).

The interval 11-191 (RKLEQRLRTL…TKCYKSALLE (181 aa)) is binds with microtubules and centrioles. Over residues 194–204 (EEEEPTSDCEE) the composition is skewed to acidic residues. The segment at 194-224 (EEEEPTSDCEEDSHLQREMGSPFETAEETPN) is disordered. Coiled coils occupy residues 224 to 263 (NSEQ…KGKI) and 353 to 379 (TEES…ELLK).

In terms of assembly, binds to centriolar microtubules.

The protein resides in the cytoplasm. It localises to the cytoskeleton. The protein localises to the microtubule organizing center. It is found in the centrosome. Its subcellular location is the centriole. The protein resides in the spindle pole. It localises to the midbody. In terms of biological role, centriole-enriched microtubule-binding protein involved in centriole biogenesis. In collaboration with CEP295 and POC1B, is required for the centriole-to-centrosome conversion by ensuring the formation of bona fide centriole wall. Functions as a linker component that maintains centrosome cohesion. Associates with CROCC and regulates its stability and localization to the centrosome. This is Centrosomal protein of 44 kDa (cep44) from Xenopus tropicalis (Western clawed frog).